The primary structure comprises 448 residues: MITIKQGLDLPIAGKPEQVIHNGNTVNEVAVLGEEYVGMRPSMKVREGDVVKKGQVLFEDKKNAGVVFTAPASGTIVAINRGEKRVLQSVVIKVEGDEQVTFERYNASELSSLTADQVKQNLVNSGLWTAFRTRPFSKVPALDAVPSSIFVNAMDTNPLATDPEVVLNEHKQDFVDGLTVLSRLFDGQKIIHLCRAPDSNIPTAEVANVKVTSFAGPHPAGLSGTHIHFIDPVSVTKSVWYLNYQDVIAIGKLFTTGELYTDRVVSLAGPQVKKPRLVRTQLGANLSQLTAGELAEGENRVISGSVLSGAKAVGVHDYLGRYALQVSVIAEGREQEFLGMIAPYSHKFSITRTVLGAFSKKLFNFTTAVNGSERAMVPIGSYERVMPLDILPTLLLRDLASGDTDSAQALGCLELDEEDLALCTFVCPGKNNYAPMLRAALDKIEKEG.

Belongs to the NqrA family. In terms of assembly, composed of six subunits; NqrA, NqrB, NqrC, NqrD, NqrE and NqrF.

It catalyses the reaction a ubiquinone + n Na(+)(in) + NADH + H(+) = a ubiquinol + n Na(+)(out) + NAD(+). Its function is as follows. NQR complex catalyzes the reduction of ubiquinone-1 to ubiquinol by two successive reactions, coupled with the transport of Na(+) ions from the cytoplasm to the periplasm. NqrA to NqrE are probably involved in the second step, the conversion of ubisemiquinone to ubiquinol. The chain is Na(+)-translocating NADH-quinone reductase subunit A from Glaesserella parasuis serovar 5 (strain SH0165) (Haemophilus parasuis).